A 361-amino-acid polypeptide reads, in one-letter code: Lipoyl synthase 1, chloroplastic (361 aa).

Positions 87, 92, 98, 124, 128, 131, and 339 each coordinate [4Fe-4S] cluster. The 222-residue stretch at Gly107 to Arg328 folds into the Radical SAM core domain.

Belongs to the radical SAM superfamily. Lipoyl synthase family. [4Fe-4S] cluster serves as cofactor.

The protein resides in the plastid. The protein localises to the chloroplast. It catalyses the reaction [[Fe-S] cluster scaffold protein carrying a second [4Fe-4S](2+) cluster] + N(6)-octanoyl-L-lysyl-[protein] + 2 oxidized [2Fe-2S]-[ferredoxin] + 2 S-adenosyl-L-methionine + 4 H(+) = [[Fe-S] cluster scaffold protein] + N(6)-[(R)-dihydrolipoyl]-L-lysyl-[protein] + 4 Fe(3+) + 2 hydrogen sulfide + 2 5'-deoxyadenosine + 2 L-methionine + 2 reduced [2Fe-2S]-[ferredoxin]. The protein operates within protein modification; protein lipoylation via endogenous pathway; protein N(6)-(lipoyl)lysine from octanoyl-[acyl-carrier-protein]: step 2/2. Functionally, catalyzes the radical-mediated insertion of two sulfur atoms into the C-6 and C-8 positions of the octanoyl moiety bound to the lipoyl domains of lipoate-dependent enzymes, thereby converting the octanoylated domains into lipoylated derivatives. This chain is Lipoyl synthase 1, chloroplastic, found in Zea mays (Maize).